The sequence spans 1654 residues: METPAGESSARGYGPPPAPAPAAERKKSHRAPSPARPKDVAGWSLAKGRRGTGPGSATACGTASSARPDKKGRAVAPGTRGTGPRVAGVRTGVRAKGRPRPGTGPRPPPPPPSLTDSSSEVSDCASEEARQLGLELALSSDAESAAGGPAGTRTGQPPQPAQSGQQPPRPPASPDEPSVAASSVGSSRLPLSASLAFSDLTEEMLDCGPGGLVRELEELRSENDYLKDEIEELRAEMLEMRDVYMEEDVYQLQELRQQLDQASKTCRILQYRLRKAERRSLRAAQTGQVDGELIRGLEQDVKVSKDISMRLHKELEVVEKKRMRLEEENEGLRQRLIETELAKQVLQTELDRPREHSLKKRGTRSLGKTDKKPTAQEDSADLKCQLHFAKEESALMCKKLTKLAKENDSMKEELLKYRSLYGDLDAALSAEELADAPHSRETELKVHLKLVEEEANLLSRRIVELEVENRGLRAEMDDMKDHGGGGGPEARLAFSSLGGECGESLAELRRHLQFVEEEAELLRRSSAELEDQNKLLLNELAKYRSEHELDVTLSEDSCSVLSEPSQEELAAAKLQIGELSGKVKKLQYENRVLLSNLQRCDLASCQSTRPMLETDAEAGDSAQCVPAPLGETLEPHAARLCRAREAEALPGLREQAALVSKAIDVLVADANGFSVGLRLCLDNECADLRLHEAPDNSEGPRDAKLIHAILVRLSVLQQELNAFTRKADVALGSSGKEQPEPFPALPALGSQGPAKEIMLSKDLGSDFQPPDFRDLLEWEPRIREAFRTGDLESKPDPSRNFRPYRAEDNDSYASEIKDLQLVLAEAHDSLRGLQEQLSQERQLRKEEADSFNQKMVQLKEDQQRALLRREFELQSLSLQRRLEQKFWSQEKNILVQESQQFKHNFLLLFMKLRWFLKRWRQGKVLPSEEDDFLEVNSMKELYLLMEEEEMNAQHSDNKACTGESWTQNTPNECIKTLADMKVTLKELCWLLQDERRGLTELQQQFAKAKATWETERAELKGHASQMELKAGKGASERPGPDWKAALQREREEQQHLLAESYSAVMELTRQLQLSERHWSQEKLQLVERLQGEKQQVEQQVKELQNRLSQLQKAAEPWVLKHSDMEKQDNSWKEARSEKTHDKEGVSEAELGGTGLKRTKSVSSMSEFESLLDCSPYLAGGDARNKKLPNGPAFAFVSTEPVEPEKDAKEKAGLSTRDCSHIGSLACQEPAGRQMQRSYTAPDKTGIRVYYSPPVARRLGVPVVHDKEGKILIEPGFLFTTAKPKESAEADGLAESSYSRWLCNFSRQRLDGGSGASTSGSGPAFPALHDFEMSGNMSDDMKEITNCVRQAMRSGSLERKVKNTSSQTVGVATVGTQTIRTVSVGLQTDPPRSSLHSKSWSPRSSSLVSVRSKQISSSLDKVHSRIERPCCSPKYGSPKLQRRSVSKLDSTKDRSLWNLHQGKQNGSAWARSTTTRDSPVLRNINDGLSSLFSVVEHSGSTESVWKLGMSEARTKPEPPKYGIVQEFFRNVCGRAPSPTTAAGEESCKKPEPLSPASYHQPEGVSRILNKKAAKAGGSEEVRPTMLSQVGKDGILRDGDGSLILPSEDAVCDCSAQSLASCFIRPSRNTIRHSPSKCRLHPSESGWGGEERAAPQ.

The disordered stretch occupies residues 1-188 (METPAGESSA…VAASSVGSSR (188 aa)). Low complexity predominate over residues 55 to 66 (GSATACGTASSA). Pro residues predominate over residues 102-113 (GTGPRPPPPPPS). A compositionally biased stretch (low complexity) spans 132–147 (LGLELALSSDAESAAG). The segment at 209-238 (PGGLVRELEELRSENDYLKDEIEELRAEML) is required for association with Golgi apparatus membrane. Coiled-coil stretches lie at residues 216–279 (LEEL…AERR), 308–349 (SMRL…LQTE), 448–546 (LKLV…YRSE), 816–843 (IKDL…ERQL), and 1079–1113 (SQEK…LQKA). The segment at 348–379 (TELDRPREHSLKKRGTRSLGKTDKKPTAQEDS) is disordered. The segment covering 1122 to 1145 (SDMEKQDNSWKEARSEKTHDKEGV) has biased composition (basic and acidic residues). A disordered region spans residues 1122–1146 (SDMEKQDNSWKEARSEKTHDKEGVS). Serine 1165 and serine 1251 each carry phosphoserine. The interval 1406 to 1505 (LVSVRSKQIS…HSGSTESVWK (100 aa)) is KR-rich domain required for microtubules binding. Disordered regions lie at residues 1427–1450 (RPCC…LDST), 1537–1560 (PTTA…YHQP), and 1627–1654 (NTIR…AAPQ). Over residues 1628–1638 (TIRHSPSKCRL) the composition is skewed to basic residues.

It belongs to the MTCL family. Interacts with CLASP2. Interacts with CLASP1. The C-terminal SOGA 25 kDa form occurs as a monomer. Proteolytically cleaved into a C-terminal SOGA 25 kDa form that is detected in plasma. Proteolytically cleaved in primary hepatocytes into a C-terminal SOGA 80 kDa form. In terms of processing, phosphorylated during mitosis in a CDK1-dependent manner. Expressed in liver (at protein level).

Its subcellular location is the secreted. It is found in the cytoplasm. It localises to the cytoskeleton. The protein localises to the golgi apparatus membrane. The protein resides in the midbody. Its function is as follows. Microtubule-associated factor that enables integration of the centrosomal and Golgi-associated microtubules on the Golgi membrane, supporting directional migration. Preferentially acts on the perinuclear microtubules accumulated around the Golgi. Associates with the Golgi membrane through the N-terminal coiled-coil region and directly binds microtubules through the C-terminal domain. Required for faithful chromosome segregation during mitosis. Regulates autophagy by playing a role in the reduction of glucose production in an adiponectin- and insulin-dependent manner. This Mus musculus (Mouse) protein is Microtubule cross-linking factor 2 (Mtcl2).